A 768-amino-acid chain; its full sequence is MLKARNCGWIRLLPLFMLSLPVQAELRCVANAVDIESFFSAATAEDKQQVEQAINSSVNLVPFGLSASNWKVHRGDLVVEGNIESNQKLIVLGNLTVKGNISTFSLSNPWVILGNVTATNIVADSPLLITGSINASGLVFIDSYYDNPSTIKGSINARGIFINDIIAPVVASSTNSEFMVRASDKHDTENVKKALMIINPDAYYWGLINDEDALKEIFKRSNIRMAGNVCNQMKKEALFRPKPSPELVQELQMLDEGKVAAFEGRDIATFDLAVMRTLPRLKGISANLRKQLINSNDEQTIESMARYMPDNEILELTDQQLGYQPVVLGLLDREPLSVEIMTRMSRLPDGVGPLNLALRENLPLDIVMTLAKRDWDMIIQELYKDAWLLPESIIDGYIRSDDSSIRQVGAGGQLTYNQAMQLANDSSNNVVTSLAFKLAEMKHHGQLLRMTPQESDKVAGYLYQKFENDDDLIRVLFLALPDNLQFNFVKRMEKKSPAYFCCRDMQVIHSDAALQRLLTRFNDPEGWSNLAKNQYLSTSMKQKIWQRALSHRKNNPKADSDAYETSADMILSELISHGEVDDQMLLNATALIRSDDWDFLESALISWDNLPAVVLKELQQNTPRNDIWAKFFLRQENSSRAQVDEALRVYYALDPDALAQLDVLAKQPDRIWWSTLAKSNLTFFKFGALNNRHTPPAVLAAEIDPEWWIVAMNNPRFPVDVLKARLKRDPLLALELVNPELDLVRQLALNGKTRAIREQAMRKLDELY.

It to E.coli YkiA.

This is an uncharacterized protein from Escherichia coli (strain K12).